The chain runs to 636 residues: Nuclear receptor subfamily 2 group C member 1 (636 aa).

Positions 149–224 (VELCVVCGDK…LGMKQDSVQC (76 aa)) form a DNA-binding region, nuclear receptor. NR C4-type zinc fingers lie at residues 152 to 172 (CVVCGDKASGRHYGAVTCEGC) and 188 to 207 (CRGSKDCVINKHYRNRCQYC). One can recognise an NR LBD domain in the interval 382–623 (ECVGSNSNLT…SIIPYILRME (242 aa)).

The protein belongs to the nuclear hormone receptor family. NR2 subfamily.

Its subcellular location is the nucleus. In terms of biological role, orphan nuclear receptor. Binds the IR7 element in the promoter of its own gene in an autoregulatory negative feedback mechanism. Primarily repressor of a broad range of genes. Binds to hormone response elements (HREs) consisting of two 5'-AGGTCA-3' half site direct repeat consensus sequences. The protein is Nuclear receptor subfamily 2 group C member 1 of Xenopus tropicalis (Western clawed frog).